A 299-amino-acid polypeptide reads, in one-letter code: Exosome complex component rrp42 (299 aa).

The protein belongs to the RNase PH family. As to quaternary structure, component of the RNA exosome complex. Specifically part of the catalytically inactive RNA exosome core complex (Exo-9) which may associate with the catalytic subunits rrp6 and dis3 in cytoplasmic- and nuclear-specific RNA exosome complex forms. Exo-9 is formed by a hexameric base ring of RNase PH domain-containing subunits and a cap ring consisting of csl4, rrp4 and rrp40.

It is found in the cytoplasm. The protein resides in the nucleus. The protein localises to the nucleolus. Its function is as follows. Non-catalytic component of the RNA exosome complex which has 3'-&gt;5' exoribonuclease activity and participates in a multitude of cellular RNA processing and degradation events. In the nucleus, the RNA exosome complex is involved in proper maturation of stable RNA species such as rRNA, snRNA and snoRNA, in the elimination of RNA processing by-products and non-coding 'pervasive' transcripts, such as antisense RNA species and cryptic unstable transcripts (CUTs), and of mRNAs with processing defects, thereby limiting or excluding their export to the cytoplasm. In the cytoplasm, the RNA exosome complex is involved in general mRNA turnover and in RNA surveillance pathways, preventing translation of aberrant mRNAs. The catalytic inactive RNA exosome core complex of 9 subunits (Exo-9) is proposed to play a pivotal role in the binding and presentation of RNA for ribonucleolysis, and to serve as a scaffold for the association with catalytic subunits and accessory proteins or complexes. ski6 is part of the hexameric ring of RNase PH domain-containing subunits proposed to form a central channel which threads RNA substrates for degradation. The polypeptide is Exosome complex component rrp42 (rrp42) (Schizosaccharomyces pombe (strain 972 / ATCC 24843) (Fission yeast)).